The following is a 273-amino-acid chain: Formamidopyrimidine-DNA glycosylase (273 aa).

The Schiff-base intermediate with DNA role is filled by P2. The active-site Proton donor is the E3. K58 (proton donor; for beta-elimination activity) is an active-site residue. The DNA site is built by H91, R110, and R153. The FPG-type zinc-finger motif lies at 238–272 (KVYGKEGQPCPRCGEDFVKIKICGRGTTYCLHCQK). R262 acts as the Proton donor; for delta-elimination activity in catalysis.

The protein belongs to the FPG family. In terms of assembly, monomer. The cofactor is Zn(2+).

The enzyme catalyses Hydrolysis of DNA containing ring-opened 7-methylguanine residues, releasing 2,6-diamino-4-hydroxy-5-(N-methyl)formamidopyrimidine.. The catalysed reaction is 2'-deoxyribonucleotide-(2'-deoxyribose 5'-phosphate)-2'-deoxyribonucleotide-DNA = a 3'-end 2'-deoxyribonucleotide-(2,3-dehydro-2,3-deoxyribose 5'-phosphate)-DNA + a 5'-end 5'-phospho-2'-deoxyribonucleoside-DNA + H(+). Functionally, involved in base excision repair of DNA damaged by oxidation or by mutagenic agents. Acts as a DNA glycosylase that recognizes and removes damaged bases. Has a preference for oxidized purines, such as 7,8-dihydro-8-oxoguanine (8-oxoG). Has AP (apurinic/apyrimidinic) lyase activity and introduces nicks in the DNA strand. Cleaves the DNA backbone by beta-delta elimination to generate a single-strand break at the site of the removed base with both 3'- and 5'-phosphates. This chain is Formamidopyrimidine-DNA glycosylase, found in Lactobacillus delbrueckii subsp. bulgaricus (strain ATCC BAA-365 / Lb-18).